We begin with the raw amino-acid sequence, 511 residues long: Myrosinase 4 (511 aa).

A signal peptide spans 1 to 23 (MAIPKAHYSLAVLVLLFVVVSSS). 3 disulfides stabilise this stretch: C31–C450, C39–C445, and C230–C233. Residues N46 and N53 are each glycosylated (N-linked (GlcNAc...) asparagine). A beta-D-glucoside contacts are provided by residues Q64, H165, and 210-211 (NQ). 2 residues coordinate a beta-D-glucoside: Y351 and E418. The active-site Nucleophile is E418. N428 carries N-linked (GlcNAc...) asparagine glycosylation. A beta-D-glucoside is bound by residues W467, 474–475 (EF), and F483. An N-linked (GlcNAc...) asparagine glycan is attached at N489.

Belongs to the glycosyl hydrolase 1 family. In terms of tissue distribution, specifically expressed in roots.

It catalyses the reaction a thioglucoside + H2O = a sugar + a thiol.. It carries out the reaction Hydrolysis of terminal, non-reducing beta-D-glucosyl residues with release of beta-D-glucose.. In terms of biological role, hydrolyzes sinigrin and, with lower efficiency, p-nitrophenyl beta-D-glucoside. This is Myrosinase 4 from Arabidopsis thaliana (Mouse-ear cress).